A 2458-amino-acid polypeptide reads, in one-letter code: Highly reducing polyketide synthase alnA (2458 aa).

A Ketosynthase family 3 (KS3) domain is found at 48–473 (TMPIAIVGMA…GANAHVILDD (426 aa)). Residues C221, H356, and H396 each act as for beta-ketoacyl synthase activity in the active site. The disordered stretch occupies residues 488–515 (HTTLSESEDSSDSGLEMDSSTSDSGEGQ). The segment covering 499-515 (DSGLEMDSSTSDSGEGQ) has biased composition (low complexity). Residues 609-932 (VFTGQGAQWP…PYMSVLSRGK (324 aa)) form a malonyl-CoA:ACP transacylase (MAT) domain region. S697 serves as the catalytic For malonyltransferase activity. Positions 1000 to 1130 (NDLLGVPVAQ…GSFSLHYEDA (131 aa)) are N-terminal hotdog fold. Residues 1000–1307 (NDLLGVPVAQ…VTEVSAGAST (308 aa)) form the PKS/mFAS DH domain. The dehydratase (DH) domain stretch occupies residues 1001 to 1305 (DLLGVPVAQQ…MTVTEVSAGA (305 aa)). The active-site Proton acceptor; for dehydratase activity is the H1032. Residues 1148 to 1307 (TRACRKLDVE…VTEVSAGAST (160 aa)) are C-terminal hotdog fold. The Proton donor; for dehydratase activity role is filled by D1218. The interval 1740–2051 (GSPSQARWVP…GQQQHERVAA (312 aa)) is enoylreductase (ER) domain. The tract at residues 2076 to 2264 (KPDATYILAG…VTDASHFNEN (189 aa)) is ketoreductase (KR) domain. In terms of domain architecture, Carrier spans 2359–2441 (STTVAQAHEV…RLALKIVSKS (83 aa)). S2401 is modified (O-(pantetheine 4'-phosphoryl)serine).

It participates in polyketide biosynthesis. Functionally, highly reducing polyketide synthase; part of the gene cluster that mediates the biosynthesis of asperlin, a polyketide showing anti-inflammatory, antitumor and antibiotic activities. The first step of the asperlin biosynthesis is the production of the intermediate 2,4,6-octatrienoic acid by the highly redusing polyketide synthase alnA with cleavage of the PKS product by the esterase alnB. 2,4,6-octatrienoic acid is further converted to asperlin via several steps involving the remaining enzymes from the cluster. The polypeptide is Highly reducing polyketide synthase alnA (Emericella nidulans (strain FGSC A4 / ATCC 38163 / CBS 112.46 / NRRL 194 / M139) (Aspergillus nidulans)).